A 202-amino-acid chain; its full sequence is FMN-dependent NADH:quinone oxidoreductase (202 aa).

Residues Ser-12 and Ser-21–Ser-23 each bind FMN.

It belongs to the azoreductase type 1 family. In terms of assembly, homodimer. FMN is required as a cofactor.

The catalysed reaction is 2 a quinone + NADH + H(+) = 2 a 1,4-benzosemiquinone + NAD(+). It catalyses the reaction N,N-dimethyl-1,4-phenylenediamine + anthranilate + 2 NAD(+) = 2-(4-dimethylaminophenyl)diazenylbenzoate + 2 NADH + 2 H(+). In terms of biological role, quinone reductase that provides resistance to thiol-specific stress caused by electrophilic quinones. Its function is as follows. Also exhibits azoreductase activity. Catalyzes the reductive cleavage of the azo bond in aromatic azo compounds to the corresponding amines. The protein is FMN-dependent NADH:quinone oxidoreductase of Mycoplasma mobile (strain ATCC 43663 / 163K / NCTC 11711) (Mesomycoplasma mobile).